The following is a 272-amino-acid chain: Tryptophan synthase alpha chain (272 aa).

Active-site proton acceptor residues include Glu49 and Asp60.

This sequence belongs to the TrpA family. As to quaternary structure, tetramer of two alpha and two beta chains.

The enzyme catalyses (1S,2R)-1-C-(indol-3-yl)glycerol 3-phosphate + L-serine = D-glyceraldehyde 3-phosphate + L-tryptophan + H2O. The protein operates within amino-acid biosynthesis; L-tryptophan biosynthesis; L-tryptophan from chorismate: step 5/5. Its function is as follows. The alpha subunit is responsible for the aldol cleavage of indoleglycerol phosphate to indole and glyceraldehyde 3-phosphate. The protein is Tryptophan synthase alpha chain of Acidithiobacillus ferrooxidans (strain ATCC 23270 / DSM 14882 / CIP 104768 / NCIMB 8455) (Ferrobacillus ferrooxidans (strain ATCC 23270)).